Here is a 229-residue protein sequence, read N- to C-terminus: Adenine nucleotide translocase lysine N-methyltransferase (229 aa).

An N-terminal sequence (NTS) region spans residues 1–22 (MDQDDPAEALTELREKRLGLLE). A helical transmembrane segment spans residues 20-42 (LLEIVQAAAGSGLAVYTIWALLL). The segment at 43–77 (QPGFRRVPLRLQVPYVGASARQVENVLSLLRGRPG) is methyltransferase (MTase). Residues 43–77 (QPGFRRVPLRLQVPYVGASARQVENVLSLLRGRPG) are pre-methyltransferase (preMT).

The protein belongs to the ANT/ATPSC lysine N-methyltransferase family.

It is found in the mitochondrion membrane. The enzyme catalyses L-lysyl-[protein] + 3 S-adenosyl-L-methionine = N(6),N(6),N(6)-trimethyl-L-lysyl-[protein] + 3 S-adenosyl-L-homocysteine + 3 H(+). Its function is as follows. Mitochondrial protein-lysine N-methyltransferase that trimethylates adenine nucleotide translocases ANT2/SLC25A5 and ANT3/SLC25A6, thereby regulating mitochondrial respiration. Probably also trimethylates ANT1/SLC25A4. In Mus musculus (Mouse), this protein is Adenine nucleotide translocase lysine N-methyltransferase.